Reading from the N-terminus, the 349-residue chain is Ribosomal RNA large subunit methyltransferase M (349 aa).

S-adenosyl-L-methionine contacts are provided by residues Ser183, Ala216–Gly219, Asp235, Asp255, and Asp271. The active-site Proton acceptor is the Lys300.

This sequence belongs to the class I-like SAM-binding methyltransferase superfamily. RNA methyltransferase RlmE family. RlmM subfamily. As to quaternary structure, monomer.

It is found in the cytoplasm. The enzyme catalyses cytidine(2498) in 23S rRNA + S-adenosyl-L-methionine = 2'-O-methylcytidine(2498) in 23S rRNA + S-adenosyl-L-homocysteine + H(+). Catalyzes the 2'-O-methylation at nucleotide C2498 in 23S rRNA. This Stutzerimonas stutzeri (strain A1501) (Pseudomonas stutzeri) protein is Ribosomal RNA large subunit methyltransferase M.